A 158-amino-acid polypeptide reads, in one-letter code: MAKKPNKSDNTIAKNRTARHEFAIQDDYEAGLQLQGWEVKAIRNGKVNIAESYVFLRDGEAFISGVTITPLNAASTHVVADPTRTRKLLLNRKEIDKLLGAVNREGQTIVALSMYWKASWVKLKIGTARGKKLHDKRADSKSRDWARDKQRIMKHSTR.

A compositionally biased stretch (basic and acidic residues) spans 136 to 151 (KRADSKSRDWARDKQR). Positions 136 to 158 (KRADSKSRDWARDKQRIMKHSTR) are disordered.

It belongs to the SmpB family.

The protein resides in the cytoplasm. Functionally, required for rescue of stalled ribosomes mediated by trans-translation. Binds to transfer-messenger RNA (tmRNA), required for stable association of tmRNA with ribosomes. tmRNA and SmpB together mimic tRNA shape, replacing the anticodon stem-loop with SmpB. tmRNA is encoded by the ssrA gene; the 2 termini fold to resemble tRNA(Ala) and it encodes a 'tag peptide', a short internal open reading frame. During trans-translation Ala-aminoacylated tmRNA acts like a tRNA, entering the A-site of stalled ribosomes, displacing the stalled mRNA. The ribosome then switches to translate the ORF on the tmRNA; the nascent peptide is terminated with the 'tag peptide' encoded by the tmRNA and targeted for degradation. The ribosome is freed to recommence translation, which seems to be the essential function of trans-translation. In Photobacterium profundum (strain SS9), this protein is SsrA-binding protein.